Consider the following 376-residue polypeptide: Outer membrane porin C (376 aa).

Positions 1–21 are cleaved as a signal peptide; the sequence is MKLRVLSLMVPALLVAGTAGA.

It belongs to the Gram-negative porin family. Homotrimer.

Its subcellular location is the cell outer membrane. Its function is as follows. Forms pores that allow passive diffusion of small molecules across the outer membrane. The sequence is that of Outer membrane porin C (ompC) from Serratia marcescens.